A 235-amino-acid polypeptide reads, in one-letter code: Aspartate/glutamate leucyltransferase (235 aa).

It belongs to the R-transferase family. Bpt subfamily.

It is found in the cytoplasm. The enzyme catalyses N-terminal L-glutamyl-[protein] + L-leucyl-tRNA(Leu) = N-terminal L-leucyl-L-glutamyl-[protein] + tRNA(Leu) + H(+). The catalysed reaction is N-terminal L-aspartyl-[protein] + L-leucyl-tRNA(Leu) = N-terminal L-leucyl-L-aspartyl-[protein] + tRNA(Leu) + H(+). Functionally, functions in the N-end rule pathway of protein degradation where it conjugates Leu from its aminoacyl-tRNA to the N-termini of proteins containing an N-terminal aspartate or glutamate. The chain is Aspartate/glutamate leucyltransferase from Pseudomonas putida (strain W619).